Consider the following 318-residue polypeptide: DNA-directed RNA polymerase subunit alpha 2 (318 aa).

An alpha N-terminal domain (alpha-NTD) region spans residues 1–227 (MALENLLHPT…NQLRNILDIE (227 aa)). The interval 242–318 (INPILLKHVE…TLIENWPQDL (77 aa)) is alpha C-terminal domain (alpha-CTD).

Belongs to the RNA polymerase alpha chain family. In terms of assembly, homodimer. The RNAP catalytic core consists of 2 alpha, 1 beta, 1 beta' and 1 omega subunit. When a sigma factor is associated with the core the holoenzyme is formed, which can initiate transcription.

The catalysed reaction is RNA(n) + a ribonucleoside 5'-triphosphate = RNA(n+1) + diphosphate. In terms of biological role, DNA-dependent RNA polymerase catalyzes the transcription of DNA into RNA using the four ribonucleoside triphosphates as substrates. This Francisella tularensis subsp. tularensis (strain FSC 198) protein is DNA-directed RNA polymerase subunit alpha 2.